The following is a 618-amino-acid chain: Glycine--tRNA ligase 2 (618 aa).

Glutamate 187 lines the glycine pocket. ATP contacts are provided by residues 219–221 (RNE) and 230–231 (RV). Residue glutamate 238 participates in glycine binding. ATP is bound at residue 347–348 (EC). 466-468 (EPS) contributes to the glycine binding site. Residue arginine 473 coordinates ATP.

Belongs to the class-II aminoacyl-tRNA synthetase family. In terms of assembly, homodimer.

Its subcellular location is the cytoplasm. It carries out the reaction tRNA(Gly) + glycine + ATP = glycyl-tRNA(Gly) + AMP + diphosphate. It catalyses the reaction 2 ATP + H(+) = P(1),P(4)-bis(5'-adenosyl) tetraphosphate + diphosphate. Its function is as follows. Catalyzes the ATP-dependent ligation of glycine to the 3'-end of its cognate tRNA, via the formation of an aminoacyl-adenylate intermediate (Gly-AMP). Also produces diadenosine tetraphosphate (Ap4A), a universal pleiotropic signaling molecule needed for cell regulation pathways, by direct condensation of 2 ATPs. Thereby, may play a special role in Ap4A homeostasis. The chain is Glycine--tRNA ligase 2 (GRS2) from Saccharomyces cerevisiae (strain ATCC 204508 / S288c) (Baker's yeast).